The following is a 455-amino-acid chain: Beta-cyclopiazonate dehydrogenase (455 aa).

An N-terminal signal peptide occupies residues 1 to 25 (MAVRIARFLGLSTVAYLALANGIDA).

It belongs to the beta-cyclopiazonate dehydrogenase family. FAD is required as a cofactor.

It carries out the reaction beta-cyclopiazonate + A = alpha-cyclopiazonate + AH2. Its function is as follows. Beta-cyclopiazonate dehydrogenase involved in the synthesis of the fungal neurotoxin alpha-cyclopiazonic acid (CPA). CpaO carries out the dehydrogenation of beta-CPA to yield an unstable enimine product, which is captured by intramolecular cyclization to create the pentacyclic fused scaffold of alpha-cyclopiazonate. This is Beta-cyclopiazonate dehydrogenase from Aspergillus oryzae (strain ATCC 42149 / RIB 40) (Yellow koji mold).